We begin with the raw amino-acid sequence, 893 residues long: Sperm-associated antigen 1 (893 aa).

The segment covering 112–126 has biased composition (basic and acidic residues); the sequence is ENTRHFHDPEKHPGV. The interval 112–155 is disordered; the sequence is ENTRHFHDPEKHPGVEDPLPPVRGSNSCPRGGKETSSKSKTAKK. TPR repeat units follow at residues 213-246, 247-279, and 280-313; these read ANRE…LPTA, TAYN…EPGN, and IKAL…EPDN. Disordered regions lie at residues 324 to 344, 349 to 368, and 373 to 437; these read EREL…KRMV, ENSG…DDGV, and MGNI…SRGN. S351 bears the Phosphoserine mark. Polar residues predominate over residues 403–415; the sequence is QEGQPETGTASTS. Basic and acidic residues predominate over residues 416–437; it reads DNHDLEERRAADSPGDLKSRGN. 5 TPR repeats span residues 429–463, 471–504, 506–538, 605–638, and 639–672; these read PGDL…EPTG, SILY…QPFA, KPLL…DCRI, FQAL…NSKA, and CAIY…DSKN. 630-637 provides a ligand contact to GTP; that stretch reads ECLKINSK. At S703 the chain carries Phosphoserine. The disordered stretch occupies residues 704–756; sequence PDSSEAARHLDTKNDTAPPSRERERRRIEIQEVDDSSDEEPERPAEASAVEEG. A compositionally biased stretch (basic and acidic residues) spans 708 to 733; sequence EAARHLDTKNDTAPPSRERERRRIEI. Acidic residues predominate over residues 734 to 744; it reads QEVDDSSDEEP. S739, S740, and S758 each carry phosphoserine.

In terms of tissue distribution, testis and sperm.

It is found in the cytoplasm. The protein localises to the dynein axonemal particle. In terms of biological role, may play a role in the cytoplasmic assembly of the ciliary dynein arms. Binds GTP and has GTPase activity. Plays a role in fertilization. The chain is Sperm-associated antigen 1 (Spag1) from Rattus norvegicus (Rat).